Reading from the N-terminus, the 307-residue chain is Protein EI24 homolog (307 aa).

2 helical membrane passes run 53–73 (FIHCIFLNGIIFLGTYLIYLY) and 92–112 (MFTIIYFSLWVYPVYIFSIIA). An N-linked (GlcNAc...) asparagine glycan is attached at asparagine 135. 4 helical membrane-spanning segments follow: residues 153–173 (LFGVILVMSAIIAFIPYTNFI), 175–195 (FVIITWLYSFWCFDYKWILRG), 225–245 (FFFPMLIGNAIFSILYPLFII), and 260–280 (GILPKQIPIFYVPEIIVNVIL).

Belongs to the EI24 family.

It is found in the membrane. The polypeptide is Protein EI24 homolog (Dictyostelium discoideum (Social amoeba)).